The primary structure comprises 106 residues: 1-deoxy-D-xylulose 5-phosphate reductoisomerase (106 aa).

Asp-3 lines the Mn(2+) pocket. 1-deoxy-D-xylulose 5-phosphate-binding residues include Ser-4, Glu-5, Ser-29, His-52, Ser-65, Asn-70, Lys-71, and Glu-74. Glu-5 serves as a coordination point for Mn(2+). Glu-74 contributes to the Mn(2+) binding site.

The protein belongs to the DXR family. Mn(2+) serves as cofactor. The cofactor is Mg(2+).

It is found in the plastid. The protein localises to the chloroplast stroma. It catalyses the reaction 2-C-methyl-D-erythritol 4-phosphate + NADP(+) = 1-deoxy-D-xylulose 5-phosphate + NADPH + H(+). The protein operates within isoprenoid biosynthesis; isopentenyl diphosphate biosynthesis via DXP pathway; isopentenyl diphosphate from 1-deoxy-D-xylulose 5-phosphate: step 1/6. Its function is as follows. Enzyme of the plastid non-mevalonate pathway for isoprenoid biosynthesis that catalyzes the NADPH-dependent rearrangement and reduction of 1-deoxy-D-xylulose-5-phosphate (DXP) to 2-C-methyl-D-erythritol 4-phosphate (MEP). Required for chloroplast development. The polypeptide is 1-deoxy-D-xylulose 5-phosphate reductoisomerase (Origanum vulgare (Wild marjoram)).